Consider the following 885-residue polypeptide: MSLISTVDDHTQDTASVASGSSATKKKYNPKVYHDDNQPLSKEAMYRAKLKYGVYNSPISGGVGVGVTDYKAATNKAANVANDNQTTVEAYRRLYVDQGAASAALKVGTEPVREKPDVHAEKFKQNRALNLNYTSAAAKALSVGTEKLFTASEEARHAGQKTYSIVSQVSAASTSRAMDMSKVLKGAERKAESRLKERSEPERKEYVKSYSMTAGAAADYGAAGGAAGAAGAAGAASRSIDLNSDVMARVAKRSELPPKQEGPTEKERNAAKFALGAATAVKDLDPKSMLPEDFAAREQQRQEFVRHMTSQKVLSMAREKVDREMASIDKQQAERRLYDNDSYNRAAVAIAQQNYQNKLNAQSEKAGKINIGGGLFLTPQEVDNIAHGLISPVLGEVSERAEAQRAADTEIATRIATYEKDLSNWKNLQRTKQTNDKNVLEVNSKRIALEKQEAKDAAQKKYDEMIKKMDETVAEKKKQLEAAKQRLEDLQEEMNMKLGMQDQKVEEELQKWDENREKDIEAARLEQEELVKPFQDELDEAEKQHEEFLKERDGIDTEITGLQEAIEGHKKKIEIYEGDIRAHDNMHVEEGGKLENLGQNKETLANTLNNDIIILANKTKEQAELSTKQARLKQLEVDAMVNERKSELNQTEIQLKKEKLQLLESMRNKAQARGDEKIDEEKVKGLFGMTSEEYLAKHAPKKEEPAEEKLETVAEEASAMKKEKPTAAAATTAAAAAATTPKKPASAPRAAPAAASPKSEKKRKGSVFDKFFLGPRKAHMIEETRTNQKVAEEKAKMDSVSKPHLVSTTNEHAKPHAAATEEAPKKVDAPKPATEVKSSEAAEDEENKLEHTFSGFSQGSVADDKGTTSGAHSETKKDGYFKEVF.

2 disordered regions span residues 1–39 (MSLI…DNQP) and 695–885 (LAKH…KEVF). The segment covering 13 to 23 (DTASVASGSSA) has biased composition (polar residues). A compositionally biased stretch (basic and acidic residues) spans 701 to 725 (KKEEPAEEKLETVAEEASAMKKEKP). Over residues 726-757 (TAAAATTAAAAAATTPKKPASAPRAAPAAASP) the composition is skewed to low complexity. 2 stretches are compositionally biased toward basic and acidic residues: residues 779–801 (HMIE…DSVS) and 873–885 (SETK…KEVF).

The protein belongs to the EIS1 family.

The protein localises to the cytoplasmic granule. The protein resides in the cell membrane. Functionally, required for normal formation of eisosomes, large cytoplasmic protein assemblies that localize to specialized domains on plasma membrane and mark the site of endocytosis. In Candida glabrata (strain ATCC 2001 / BCRC 20586 / JCM 3761 / NBRC 0622 / NRRL Y-65 / CBS 138) (Yeast), this protein is Eisosome protein 1 (EIS1).